Here is an 883-residue protein sequence, read N- to C-terminus: Protein P (883 aa).

The segment at 1 to 183 (MHPFSRLFRN…GKPYSWEHRQ (183 aa)) is terminal protein domain (TP). The tract at residues 184-386 (LVQHNGQQHK…YCIHHIVSSL (203 aa)) is spacer. A disordered region spans residues 298–344 (RNSGHTTWFSSASNSNKSRSREKAYSSNSTSKRYSPPLNYEKSDFSS). The interval 387–728 (DDWGPCTVTG…YEELWPVVRQ (342 aa)) is polymerase/reverse transcriptase domain (RT). Residues 397 to 638 (DVTIKSPRTP…NHLHFMGYVI (242 aa)) enclose the Reverse transcriptase domain. The Mg(2+) site is built by Asp-469, Asp-589, and Asp-590.

Belongs to the hepadnaviridae P protein family.

The catalysed reaction is DNA(n) + a 2'-deoxyribonucleoside 5'-triphosphate = DNA(n+1) + diphosphate. The enzyme catalyses Endonucleolytic cleavage to 5'-phosphomonoester.. Activated by host HSP70 and HSP40 in vitro to be able to bind the epsilon loop of the pgRNA. Because deletion of the RNase H region renders the protein partly chaperone-independent, the chaperones may be needed indirectly to relieve occlusion of the RNA-binding site by this domain. Inhibited by several reverse-transcriptase inhibitors: Lamivudine, Adefovir and Entecavir. Its function is as follows. Multifunctional enzyme that converts the viral RNA genome into dsDNA in viral cytoplasmic capsids. This enzyme displays a DNA polymerase activity that can copy either DNA or RNA templates, and a ribonuclease H (RNase H) activity that cleaves the RNA strand of RNA-DNA heteroduplexes in a partially processive 3'- to 5'-endonucleasic mode. Neo-synthesized pregenomic RNA (pgRNA) are encapsidated together with the P protein, and reverse-transcribed inside the nucleocapsid. Initiation of reverse-transcription occurs first by binding the epsilon loop on the pgRNA genome, and is initiated by protein priming, thereby the 5'-end of (-)DNA is covalently linked to P protein. Partial (+)DNA is synthesized from the (-)DNA template and generates the relaxed circular DNA (RC-DNA) genome. After budding and infection, the RC-DNA migrates in the nucleus, and is converted into a plasmid-like covalently closed circular DNA (cccDNA). The activity of P protein does not seem to be necessary for cccDNA generation, and is presumably released from (+)DNA by host nuclear DNA repair machinery. The polypeptide is Protein P (Woodchuck hepatitis B virus (isolate 2) (WHV)).